The chain runs to 208 residues: Large ribosomal subunit protein bL25 (208 aa).

The protein belongs to the bacterial ribosomal protein bL25 family. CTC subfamily. Part of the 50S ribosomal subunit; part of the 5S rRNA/L5/L18/L25 subcomplex. Contacts the 5S rRNA. Binds to the 5S rRNA independently of L5 and L18.

Its function is as follows. This is one of the proteins that binds to the 5S RNA in the ribosome where it forms part of the central protuberance. This is Large ribosomal subunit protein bL25 from Acidovorax ebreus (strain TPSY) (Diaphorobacter sp. (strain TPSY)).